A 250-amino-acid polypeptide reads, in one-letter code: Pyrroloquinoline-quinone synthase (250 aa).

Belongs to the PqqC family.

It carries out the reaction 6-(2-amino-2-carboxyethyl)-7,8-dioxo-1,2,3,4,7,8-hexahydroquinoline-2,4-dicarboxylate + 3 O2 = pyrroloquinoline quinone + 2 H2O2 + 2 H2O + H(+). It functions in the pathway cofactor biosynthesis; pyrroloquinoline quinone biosynthesis. Functionally, ring cyclization and eight-electron oxidation of 3a-(2-amino-2-carboxyethyl)-4,5-dioxo-4,5,6,7,8,9-hexahydroquinoline-7,9-dicarboxylic-acid to PQQ. This is Pyrroloquinoline-quinone synthase from Xanthomonas oryzae pv. oryzae (strain MAFF 311018).